Reading from the N-terminus, the 318-residue chain is NADH-ubiquinone oxidoreductase chain 1 (318 aa).

A run of 8 helical transmembrane segments spans residues 2 to 22 (FLMN…FLTL), 70 to 90 (MFIL…IPMP), 100 to 120 (LGVL…LWSG), 136 to 156 (VAQT…IMML), 171 to 191 (HLWL…STLA), 231 to 251 (IIMM…NPLF), 253 to 273 (ELFT…FLWV), and 294 to 314 (LPLT…LAGI).

This sequence belongs to the complex I subunit 1 family.

It localises to the mitochondrion inner membrane. The catalysed reaction is a ubiquinone + NADH + 5 H(+)(in) = a ubiquinol + NAD(+) + 4 H(+)(out). Core subunit of the mitochondrial membrane respiratory chain NADH dehydrogenase (Complex I) that is believed to belong to the minimal assembly required for catalysis. Complex I functions in the transfer of electrons from NADH to the respiratory chain. The immediate electron acceptor for the enzyme is believed to be ubiquinone. The sequence is that of NADH-ubiquinone oxidoreductase chain 1 (MT-ND1) from Priodontes maximus (Giant armadillo).